A 215-amino-acid chain; its full sequence is Outer-membrane lipoprotein LolB (215 aa).

Residues 1 to 21 (MLIPKKYYLLIILLSNCLLAS) form the signal peptide. Residue cysteine 22 is the site of N-palmitoyl cysteine attachment. Residue cysteine 22 is the site of S-diacylglycerol cysteine attachment.

It belongs to the LolB family. In terms of assembly, monomer.

It is found in the cell outer membrane. Plays a critical role in the incorporation of lipoproteins in the outer membrane after they are released by the LolA protein. This Baumannia cicadellinicola subsp. Homalodisca coagulata protein is Outer-membrane lipoprotein LolB.